A 452-amino-acid chain; its full sequence is tRNA(Ile)-lysidine synthase (452 aa).

27–32 (SGGIDS) is an ATP binding site.

This sequence belongs to the tRNA(Ile)-lysidine synthase family.

Its subcellular location is the cytoplasm. It catalyses the reaction cytidine(34) in tRNA(Ile2) + L-lysine + ATP = lysidine(34) in tRNA(Ile2) + AMP + diphosphate + H(+). Ligates lysine onto the cytidine present at position 34 of the AUA codon-specific tRNA(Ile) that contains the anticodon CAU, in an ATP-dependent manner. Cytidine is converted to lysidine, thus changing the amino acid specificity of the tRNA from methionine to isoleucine. The sequence is that of tRNA(Ile)-lysidine synthase from Persephonella marina (strain DSM 14350 / EX-H1).